The sequence spans 344 residues: Dihydroorotase (344 aa).

Zn(2+) contacts are provided by H14 and H16. Residues 16 to 18 (HVR) and N42 contribute to the substrate site. The Zn(2+) site is built by K99, H136, and H174. An N6-carboxylysine modification is found at K99. H136 is a substrate binding site. Substrate is bound at residue L219. Position 247 (D247) interacts with Zn(2+). D247 is an active-site residue. Substrate is bound by residues H251 and A263.

Belongs to the metallo-dependent hydrolases superfamily. DHOase family. Class II DHOase subfamily. Homodimer. Zn(2+) serves as cofactor.

It catalyses the reaction (S)-dihydroorotate + H2O = N-carbamoyl-L-aspartate + H(+). Its pathway is pyrimidine metabolism; UMP biosynthesis via de novo pathway; (S)-dihydroorotate from bicarbonate: step 3/3. Functionally, catalyzes the reversible cyclization of carbamoyl aspartate to dihydroorotate. The sequence is that of Dihydroorotase from Leptothrix cholodnii (strain ATCC 51168 / LMG 8142 / SP-6) (Leptothrix discophora (strain SP-6)).